A 285-amino-acid chain; its full sequence is Inositol oxygenase (285 aa).

A substrate-binding site is contributed by Arg29. Ser33 carries the post-translational modification Phosphoserine. Residue 85–88 (DESD) participates in substrate binding. Fe cation contacts are provided by His98, His123, and Asp124. Substrate-binding positions include Lys127 and 141-142 (GD). Residues His194, His220, and Asp253 each coordinate Fe cation. 220 to 221 (HS) contributes to the substrate binding site.

This sequence belongs to the myo-inositol oxygenase family. The cofactor is Fe cation. In terms of tissue distribution, kidney specific. Renal proximal tubules.

The protein localises to the cytoplasm. It catalyses the reaction myo-inositol + O2 = D-glucuronate + H2O + H(+). The protein operates within polyol metabolism; myo-inositol degradation into D-glucuronate; D-glucuronate from myo-inositol: step 1/1. The chain is Inositol oxygenase (Miox) from Mus musculus (Mouse).